The sequence spans 71 residues: ATP synthase subunit c (71 aa).

2 helical membrane-spanning segments follow: residues 5 to 25 (AIGIAAGLAAIGGAIGVAIIV) and 47 to 67 (FIGAPLAEAVPIIAIVIAFLL).

Belongs to the ATPase C chain family. F-type ATPases have 2 components, F(1) - the catalytic core - and F(0) - the membrane proton channel. F(1) has five subunits: alpha(3), beta(3), gamma(1), delta(1), epsilon(1). F(0) has three main subunits: a(1), b(2) and c(10-14). The alpha and beta chains form an alternating ring which encloses part of the gamma chain. F(1) is attached to F(0) by a central stalk formed by the gamma and epsilon chains, while a peripheral stalk is formed by the delta and b chains.

The protein localises to the cell membrane. Its function is as follows. F(1)F(0) ATP synthase produces ATP from ADP in the presence of a proton or sodium gradient. F-type ATPases consist of two structural domains, F(1) containing the extramembraneous catalytic core and F(0) containing the membrane proton channel, linked together by a central stalk and a peripheral stalk. During catalysis, ATP synthesis in the catalytic domain of F(1) is coupled via a rotary mechanism of the central stalk subunits to proton translocation. Key component of the F(0) channel; it plays a direct role in translocation across the membrane. A homomeric c-ring of between 10-14 subunits forms the central stalk rotor element with the F(1) delta and epsilon subunits. The protein is ATP synthase subunit c of Shouchella clausii (strain KSM-K16) (Alkalihalobacillus clausii).